The chain runs to 308 residues: Acetyl-coenzyme A carboxylase carboxyl transferase subunit beta 1 (308 aa).

One can recognise a CoA carboxyltransferase N-terminal domain in the interval 25–294 (VWTKCTSCEQ…PLVVSVNESP (270 aa)). Zn(2+) is bound by residues cysteine 29, cysteine 32, cysteine 48, and cysteine 51. The C4-type zinc-finger motif lies at 29-51 (CTSCEQVLYHAELERNLEVCPKC). The disordered stretch occupies residues 288 to 308 (VSVNESPNEEPYSVPEVDEKG).

The protein belongs to the AccD/PCCB family. In terms of assembly, acetyl-CoA carboxylase is a heterohexamer composed of biotin carboxyl carrier protein (AccB), biotin carboxylase (AccC) and two subunits each of ACCase subunit alpha (AccA) and ACCase subunit beta (AccD). Zn(2+) serves as cofactor.

The protein resides in the cytoplasm. It catalyses the reaction N(6)-carboxybiotinyl-L-lysyl-[protein] + acetyl-CoA = N(6)-biotinyl-L-lysyl-[protein] + malonyl-CoA. It participates in lipid metabolism; malonyl-CoA biosynthesis; malonyl-CoA from acetyl-CoA: step 1/1. In terms of biological role, component of the acetyl coenzyme A carboxylase (ACC) complex. Biotin carboxylase (BC) catalyzes the carboxylation of biotin on its carrier protein (BCCP) and then the CO(2) group is transferred by the transcarboxylase to acetyl-CoA to form malonyl-CoA. This is Acetyl-coenzyme A carboxylase carboxyl transferase subunit beta 1 from Vibrio parahaemolyticus serotype O3:K6 (strain RIMD 2210633).